The following is a 222-amino-acid chain: Eukaryotic translation initiation factor 3 subunit K (222 aa).

Positions 46-208 (YDLEANLAVL…KIKTKNITEK (163 aa)) constitute a PCI domain.

This sequence belongs to the eIF-3 subunit K family. Component of the eukaryotic translation initiation factor 3 (eIF-3) complex. The eIF-3 complex interacts with pix.

It is found in the cytoplasm. Component of the eukaryotic translation initiation factor 3 (eIF-3) complex, which is involved in protein synthesis of a specialized repertoire of mRNAs and, together with other initiation factors, stimulates binding of mRNA and methionyl-tRNAi to the 40S ribosome. The eIF-3 complex specifically targets and initiates translation of a subset of mRNAs involved in cell proliferation. The sequence is that of Eukaryotic translation initiation factor 3 subunit K from Drosophila virilis (Fruit fly).